We begin with the raw amino-acid sequence, 434 residues long: Homoserine dehydrogenase (434 aa).

NADPH is bound by residues Thr-13 and Val-14. Val-14, Ala-33, and Ala-43 together coordinate NAD(+). Position 14 (Val-14) interacts with NADP(+). Residue Arg-45 coordinates NADPH. Arg-45, Arg-46, and Lys-103 together coordinate NADP(+). Lys-103 provides a ligand contact to NADPH. Na(+) is bound by residues Glu-127, Val-130, Gly-132, and Ile-134. Positions 185 and 188 each coordinate NADP(+). Positions 188 and 199 each coordinate L-homoserine. The Proton donor role is filled by Lys-203. Gly-300 is an NADPH binding site. Gly-300 lines the NAD(+) pocket. Gly-300 is a binding site for NADP(+). An ACT domain is found at 353–429; it reads YLRIQAKDHP…GVSGPVVRIR (77 aa).

This sequence belongs to the homoserine dehydrogenase family. The cofactor is a metal cation.

The enzyme catalyses L-homoserine + NADP(+) = L-aspartate 4-semialdehyde + NADPH + H(+). The catalysed reaction is L-homoserine + NAD(+) = L-aspartate 4-semialdehyde + NADH + H(+). Its pathway is amino-acid biosynthesis; L-methionine biosynthesis via de novo pathway; L-homoserine from L-aspartate: step 3/3. It functions in the pathway amino-acid biosynthesis; L-threonine biosynthesis; L-threonine from L-aspartate: step 3/5. With respect to regulation, feedback inhibition by threonine. In terms of biological role, catalyzes the conversion of L-aspartate-beta-semialdehyde (L-Asa) to L-homoserine (L-Hse), the third step in the biosynthesis of threonine and methionine from aspartate. The protein is Homoserine dehydrogenase (hom) of Pseudomonas aeruginosa (strain ATCC 15692 / DSM 22644 / CIP 104116 / JCM 14847 / LMG 12228 / 1C / PRS 101 / PAO1).